We begin with the raw amino-acid sequence, 244 residues long: NAD(P)H-quinone oxidoreductase subunit K (244 aa).

Positions 51, 52, 116, and 147 each coordinate [4Fe-4S] cluster.

Belongs to the complex I 20 kDa subunit family. In terms of assembly, NDH-1 can be composed of about 15 different subunits; different subcomplexes with different compositions have been identified which probably have different functions. Requires [4Fe-4S] cluster as cofactor.

The protein localises to the cellular thylakoid membrane. The catalysed reaction is a plastoquinone + NADH + (n+1) H(+)(in) = a plastoquinol + NAD(+) + n H(+)(out). It carries out the reaction a plastoquinone + NADPH + (n+1) H(+)(in) = a plastoquinol + NADP(+) + n H(+)(out). Functionally, NDH-1 shuttles electrons from an unknown electron donor, via FMN and iron-sulfur (Fe-S) centers, to quinones in the respiratory and/or the photosynthetic chain. The immediate electron acceptor for the enzyme in this species is believed to be plastoquinone. Couples the redox reaction to proton translocation, and thus conserves the redox energy in a proton gradient. Cyanobacterial NDH-1 also plays a role in inorganic carbon-concentration. This is NAD(P)H-quinone oxidoreductase subunit K from Synechococcus sp. (strain JA-3-3Ab) (Cyanobacteria bacterium Yellowstone A-Prime).